Consider the following 101-residue polypeptide: Small ribosomal subunit protein bS18c (101 aa).

The protein belongs to the bacterial ribosomal protein bS18 family. In terms of assembly, part of the 30S ribosomal subunit.

It is found in the plastid. It localises to the chloroplast. The sequence is that of Small ribosomal subunit protein bS18c from Morus indica (Mulberry).